A 161-amino-acid chain; its full sequence is Nucleotide-binding protein LHK_01423 (161 aa).

This sequence belongs to the YajQ family.

In terms of biological role, nucleotide-binding protein. The chain is Nucleotide-binding protein LHK_01423 from Laribacter hongkongensis (strain HLHK9).